The primary structure comprises 286 residues: MQMTAEEKEISMDTPAKTATRDIYIPSERKSVSGGGKPHVVAKDFSIFYGDFEAVKKVNADILSKYVTAIIGPSGCGKSTFLRAINRMNDLIPSCHTTGTLRFDGEDIYGKLTDEVLLRKKIGMVFQKPNPFPKSIFDNIAYGPRLHGMNDKKQLAEVVEKSLRKAALWDEVSDRLERNALGLSGGQQQRLCVARTLAVEPEILLLDEPTSALDPKATAKIEDLIQELRGSYTIMIVTHNMQQASRVSDYTMFFYEGTLVEHAGTSQLFTNPRDRMTEDYITGRFS.

The region spanning 40 to 281 (VVAKDFSIFY…PRDRMTEDYI (242 aa)) is the ABC transporter domain. Residue 72 to 79 (GPSGCGKS) coordinates ATP.

It belongs to the ABC transporter superfamily. Phosphate importer (TC 3.A.1.7) family. The complex is composed of two ATP-binding proteins (PstB), two transmembrane proteins (PstC and PstA) and a solute-binding protein (PstS).

Its subcellular location is the cell inner membrane. The enzyme catalyses phosphate(out) + ATP + H2O = ADP + 2 phosphate(in) + H(+). Functionally, part of the ABC transporter complex PstSACB involved in phosphate import. Responsible for energy coupling to the transport system. The protein is Phosphate import ATP-binding protein PstB of Chlorobium luteolum (strain DSM 273 / BCRC 81028 / 2530) (Pelodictyon luteolum).